The following is a 186-amino-acid chain: Inner membrane-spanning protein YciB (186 aa).

A run of 6 helical transmembrane segments spans residues 3-23, 24-44, 49-69, 76-96, 121-141, and 149-169; these read FLFD…AGIY, VATT…WFKH, AMQW…LIFH, WKPT…AVLL, LVWS…AYHF, and FKLF…SVWL.

It belongs to the YciB family.

It is found in the cell inner membrane. In terms of biological role, plays a role in cell envelope biogenesis, maintenance of cell envelope integrity and membrane homeostasis. The protein is Inner membrane-spanning protein YciB of Ralstonia nicotianae (strain ATCC BAA-1114 / GMI1000) (Ralstonia solanacearum).